Consider the following 234-residue polypeptide: Probable transcriptional regulatory protein MYCGA1330 (234 aa).

Belongs to the TACO1 family.

It localises to the cytoplasm. In Mycoplasmoides gallisepticum (strain R(low / passage 15 / clone 2)) (Mycoplasma gallisepticum), this protein is Probable transcriptional regulatory protein MYCGA1330.